The chain runs to 82 residues: M-zodatoxin-Lt3b (82 aa).

The signal sequence occupies residues 1–22 (MKTYAVLLALVVAFVCIAESTG). Residues 23-61 (YPVEDLEDDELTELEAEALLEDLLEDLELEDLDYNEEAR) constitute a propeptide that is removed on maturation. Positions 58–61 (EEAR) match the Processing quadruplet motif motif. Ala-81 is subject to Alanine amide.

Cleavage of the propeptide depends on the processing quadruplet motif (XXXR, with at least one of X being E). Expressed by the venom gland.

It is found in the secreted. In terms of biological role, it has antimicrobial activity against Gram-positive bacteria (A.globiformis VKM Ac-1112 (MIC=0.7 uM), and B.subtilis VKM B-501 (MIC=2.9 uM)), Gram-negative bacteria (E.coli DH5-alpha (MIC=23 uM), E.coli MH1 (MIC=28 uM), and P.aeruginosa PAO1 (MIC&gt;45 uM)), and yeasts (P.pastoris GS115 (MIC=23 uM), and S.cerevisiae Y190 (MIC=23 uM)). Does not have hemolytic against rabbit erythrocytes. Causes paralysis, but is not lethal when injected into insect (M.domestica) larvae. In Lachesana tarabaevi (Spider), this protein is M-zodatoxin-Lt3b.